Consider the following 665-residue polypeptide: DNA ligase (665 aa).

NAD(+)-binding positions include 31–35 (DKEFD), 80–81 (SL), and glutamate 110. Residue lysine 112 is the N6-AMP-lysine intermediate of the active site. Positions 133, 170, 285, and 309 each coordinate NAD(+). The Zn(2+) site is built by cysteine 403, cysteine 406, cysteine 421, and cysteine 427. Residues 587–665 (GHTDKLAGQS…NEEEFLKLIS (79 aa)) enclose the BRCT domain.

It belongs to the NAD-dependent DNA ligase family. LigA subfamily. Mg(2+) is required as a cofactor. Requires Mn(2+) as cofactor.

It catalyses the reaction NAD(+) + (deoxyribonucleotide)n-3'-hydroxyl + 5'-phospho-(deoxyribonucleotide)m = (deoxyribonucleotide)n+m + AMP + beta-nicotinamide D-nucleotide.. Functionally, DNA ligase that catalyzes the formation of phosphodiester linkages between 5'-phosphoryl and 3'-hydroxyl groups in double-stranded DNA using NAD as a coenzyme and as the energy source for the reaction. It is essential for DNA replication and repair of damaged DNA. The protein is DNA ligase of Bacteroides fragilis (strain ATCC 25285 / DSM 2151 / CCUG 4856 / JCM 11019 / LMG 10263 / NCTC 9343 / Onslow / VPI 2553 / EN-2).